The chain runs to 207 residues: Large ribosomal subunit protein uL4 (207 aa).

The disordered stretch occupies residues 49–79; sequence HKVKSRGEVSGGGKKPWRQKGTGRARAGTSR.

It belongs to the universal ribosomal protein uL4 family. Part of the 50S ribosomal subunit.

In terms of biological role, one of the primary rRNA binding proteins, this protein initially binds near the 5'-end of the 23S rRNA. It is important during the early stages of 50S assembly. It makes multiple contacts with different domains of the 23S rRNA in the assembled 50S subunit and ribosome. Functionally, forms part of the polypeptide exit tunnel. The chain is Large ribosomal subunit protein uL4 from Heliobacterium modesticaldum (strain ATCC 51547 / Ice1).